The sequence spans 554 residues: Inactive sesquithujene synthase B (554 aa).

Residues Asp-308 and Asp-312 each contribute to the Mg(2+) site. The substrate site is built by Asp-308, Asp-312, Arg-449, and Asn-452. The short motif at 308–312 (DDMFD) is the DDXXD motif element. Asn-452, Ser-456, and Glu-460 together coordinate Mg(2+).

It belongs to the terpene synthase family. In terms of assembly, monomer. Requires Mg(2+) as cofactor. Mn(2+) is required as a cofactor.

It localises to the cytoplasm. It functions in the pathway secondary metabolite biosynthesis; terpenoid biosynthesis. Its function is as follows. Non-functional sesquiterpene synthase having less than 1% of the activity found in TPS5A. In Zea mays (Maize), this protein is Inactive sesquithujene synthase B.